Consider the following 345-residue polypeptide: Viral Fc-gamma receptor-like protein UL119 (345 aa).

The signal sequence occupies residues 1–23 (MCSVLAIALVVALLGDMHPGVKS). Residues 23 to 42 (SSTTSAVTSPSNTTVTSTTS) form a disordered region. Residues 24 to 294 (STTSAVTSPS…KSDPLFEDRL (271 aa)) are Virion surface-facing. Residues Asn-34, Asn-48, Asn-95, Asn-104, Asn-148, Asn-179, Asn-198, Asn-217, Asn-225, Asn-241, Asn-244, and Asn-260 are each glycosylated (N-linked (GlcNAc...) asparagine; by host). The Ig-like V-type domain maps to 91–190 (QVSLNATCKV…TWDLFTYPIY (100 aa)). The chain crosses the membrane as a helical span at residues 295 to 317 (LAYGVLAFLVFMVIILLYVTYML). Over 318–345 (ARRRDWSYKRLEEPVEEKKHPVPYFKQW) the chain is Intravirion.

The protein resides in the virion membrane. Serves as a receptor for the Fc part of human IgG. May thus be involved in interfering with host Ig-mediated immune responses. In Human cytomegalovirus (strain AD169) (HHV-5), this protein is Viral Fc-gamma receptor-like protein UL119 (UL119/UL118).